Reading from the N-terminus, the 263-residue chain is 3-deoxy-manno-octulosonate cytidylyltransferase (263 aa).

This sequence belongs to the KdsB family.

It localises to the cytoplasm. It catalyses the reaction 3-deoxy-alpha-D-manno-oct-2-ulosonate + CTP = CMP-3-deoxy-beta-D-manno-octulosonate + diphosphate. Its pathway is nucleotide-sugar biosynthesis; CMP-3-deoxy-D-manno-octulosonate biosynthesis; CMP-3-deoxy-D-manno-octulosonate from 3-deoxy-D-manno-octulosonate and CTP: step 1/1. The protein operates within bacterial outer membrane biogenesis; lipopolysaccharide biosynthesis. In terms of biological role, activates KDO (a required 8-carbon sugar) for incorporation into bacterial lipopolysaccharide in Gram-negative bacteria. The chain is 3-deoxy-manno-octulosonate cytidylyltransferase from Burkholderia multivorans (strain ATCC 17616 / 249).